The chain runs to 90 residues: Large ribosomal subunit protein eL37 (90 aa).

The A20-type zinc finger occupies 13 to 46 (NKSHTLCNRCGRRSFHVQKKTCSSCGYPAAKMRS). Zn(2+) contacts are provided by Cys19, Cys22, Cys34, and Cys37.

Belongs to the eukaryotic ribosomal protein eL37 family. As to quaternary structure, component of the large ribosomal subunit. Mature ribosomes consist of a small (40S) and a large (60S) subunit. The 40S subunit contains about 32 different proteins and 1 molecule of RNA (18S). The 60S subunit contains 45 different proteins and 3 molecules of RNA (25S, 5.8S and 5S). It depends on Zn(2+) as a cofactor.

The protein localises to the cytoplasm. In terms of biological role, component of the ribosome, a large ribonucleoprotein complex responsible for the synthesis of proteins in the cell. The small ribosomal subunit (SSU) binds messenger RNAs (mRNAs) and translates the encoded message by selecting cognate aminoacyl-transfer RNA (tRNA) molecules. The large subunit (LSU) contains the ribosomal catalytic site termed the peptidyl transferase center (PTC), which catalyzes the formation of peptide bonds, thereby polymerizing the amino acids delivered by tRNAs into a polypeptide chain. The nascent polypeptides leave the ribosome through a tunnel in the LSU and interact with protein factors that function in enzymatic processing, targeting, and the membrane insertion of nascent chains at the exit of the ribosomal tunnel. The sequence is that of Large ribosomal subunit protein eL37 from Candida albicans (strain SC5314 / ATCC MYA-2876) (Yeast).